Here is a 789-residue protein sequence, read N- to C-terminus: Zinc finger FYVE domain-containing protein 1 (789 aa).

Positions 416-788 are required for localization in the lipid droplets; that stretch reads MAHSSFFPDE…LSVMTGKGPL (373 aa). 2 consecutive FYVE-type zinc fingers follow at residues 598-659 and 715-775; these read NSQI…EARN and DHEI…KKPA. Positions 604, 607, 620, 623, 628, 631, 651, 654, 721, 724, 737, 740, 745, 748, 767, and 770 each coordinate Zn(2+).

In terms of assembly, interacts with RAB18 (in GTP-bound form). Interacts with BSCL2 in a RAB18-dependent manner. Interacts with ZW10.

It localises to the golgi apparatus. Its subcellular location is the golgi stack. The protein localises to the endoplasmic reticulum. It is found in the preautophagosomal structure. The protein resides in the lipid droplet. It localises to the mitochondrion. Plays a role in the formation of lipid droplets (LDs) which are storage organelles at the center of lipid and energy homeostasis. Regulates the morphology, size and distribution of LDs. Mediates the formation of endoplasmic reticulum-lipid droplets (ER-LD) contact sites by forming a complex with RAB18 and ZW10. Binds to phosphatidylinositol 3-phosphate (PtdIns3P) through FYVE-type zinc finger. The polypeptide is Zinc finger FYVE domain-containing protein 1 (ZFYVE1) (Pongo abelii (Sumatran orangutan)).